The chain runs to 441 residues: UPF0761 membrane protein RSc1559 (441 aa).

Helical transmembrane passes span 44 to 64, 101 to 121, 141 to 161, 182 to 202, 207 to 227, and 248 to 268; these read VLSLVPILTVAFALFTAFPMF, GLTAAGLVGLVVTSVMTMLTV, VLVFWALVSFGPVLIGASLSV, VVVGLVPILLSAIAFAMLYVF, LVAWRDAFLAGLVAAVAFEIA, and FAALPIFLLWIYVSWLVTLLG.

Belongs to the UPF0761 family.

The protein localises to the cell inner membrane. This is UPF0761 membrane protein RSc1559 from Ralstonia nicotianae (strain ATCC BAA-1114 / GMI1000) (Ralstonia solanacearum).